A 484-amino-acid polypeptide reads, in one-letter code: MVGASGSDAGAISGSGNQRLPTLTDLLYQLATRAVTSEELVRRSLRAIDVSQPTLNAFRVVLTESALADAAAADKRRAAGDTAPLLGIPIAVKDDVDVAGVPTAFGTQGYVAPATDDCEVVRRLKAAGAVIVGKTNTCELGQWPFTSGPGFGHTRNPWSRRHTPGGSSGGSAAAVAAGLVTAAIGSDGAGSIRIPAAWTHLVGIKPQRGRISTWPLPEAFNGVTVNGVLARTVEDAALVLDAASGNVEGDRHQPPPVTVSDFVGIAPGPLKIALSTHFPYTGFRAKLHPEILAATQRVGDQLELLGHTVVKGNPDYGLRLSWNFLARSTAGLWEWAERLGDEVTLDRRTVSNLRMGHVLSQAILRSARRHEAADQRRVGSIFDIVDVVLAPTTAQPPPMARAFDRLGSFGTDRAIIAACPSTWPWNLLGWPSINVPAGFTSDGLPIGVQLMGPANSEGMLISLAAELEAVSGWATKQPQVWWTS.

Catalysis depends on charge relay system residues Lys93 and Ser167. The Acyl-ester intermediate role is filled by Ser191.

This sequence belongs to the amidase family.

It carries out the reaction a monocarboxylic acid amide + H2O = a monocarboxylate + NH4(+). In Mycobacterium bovis (strain ATCC BAA-935 / AF2122/97), this protein is Putative amidase AmiA2 (amiA2).